We begin with the raw amino-acid sequence, 352 residues long: 4-hydroxy-3-methylbut-2-en-1-yl diphosphate synthase (flavodoxin) (352 aa).

[4Fe-4S] cluster is bound by residues cysteine 262, cysteine 265, cysteine 297, and glutamate 304.

Belongs to the IspG family. [4Fe-4S] cluster serves as cofactor.

It catalyses the reaction (2E)-4-hydroxy-3-methylbut-2-enyl diphosphate + oxidized [flavodoxin] + H2O + 2 H(+) = 2-C-methyl-D-erythritol 2,4-cyclic diphosphate + reduced [flavodoxin]. The protein operates within isoprenoid biosynthesis; isopentenyl diphosphate biosynthesis via DXP pathway; isopentenyl diphosphate from 1-deoxy-D-xylulose 5-phosphate: step 5/6. In terms of biological role, converts 2C-methyl-D-erythritol 2,4-cyclodiphosphate (ME-2,4cPP) into 1-hydroxy-2-methyl-2-(E)-butenyl 4-diphosphate. The sequence is that of 4-hydroxy-3-methylbut-2-en-1-yl diphosphate synthase (flavodoxin) from Campylobacter curvus (strain 525.92).